We begin with the raw amino-acid sequence, 1720 residues long: 182 kDa tankyrase-1-binding protein (1720 aa).

A disordered region spans residues 1–137 (MKGSTLREGT…PPLTPPARCA (137 aa)). Serine 14 bears the Phosphoserine mark. A compositionally biased stretch (basic and acidic residues) spans 117–127 (SGKEDAGKEDL). The residue at position 131 (threonine 131) is a Phosphothreonine. A phosphoserine mark is found at serine 178 and serine 220. Disordered stretches follow at residues 185-472 (SRLT…ESNW) and 485-595 (RPSG…EDQE). The segment at 209–1563 (EEDSKSPAKG…TEILDSAMYR (1355 aa)) is acidic. Over residues 232–243 (QEEHSKTPEERN) the composition is skewed to basic and acidic residues. Threonine 238 is modified (phosphothreonine). Residues 266–287 (VSKTWVTSSADPVSEHGGSTSA) are compositionally biased toward polar residues. Residues serine 286 and serine 300 each carry the phosphoserine modification. Low complexity predominate over residues 296 to 316 (PASESPRLSSRPSSPCHSQLS). The segment covering 317 to 327 (ETQSPAASEAS) has biased composition (polar residues). Phosphoserine occurs at positions 429 and 437. Positions 449-459 (TLPQGQGSQSA) are enriched in polar residues. Phosphoserine occurs at positions 496 and 500. A compositionally biased stretch (low complexity) spans 502–518 (ITEASEAAEAAEADSWA). 2 positions are modified to phosphothreonine: threonine 503 and threonine 533. Residues serine 539, serine 568, serine 602, serine 673, serine 692, and serine 713 each carry the phosphoserine modification. Disordered stretches follow at residues 659–720 (TTLP…CSEG), 734–924 (GVAT…EFEK), and 955–1081 (SGGG…GWAG). Over residues 742–758 (SSFGSSSWSQDTSQNYS) the composition is skewed to low complexity. A phosphoserine mark is found at serine 763, serine 796, serine 807, serine 845, serine 866, serine 871, serine 876, serine 887, serine 912, serine 976, serine 980, serine 1006, serine 1017, and serine 1022. Basic and acidic residues predominate over residues 840–866 (FGKRESQDPHSIHDKELQDQEFGKRDS). Basic and acidic residues predominate over residues 991–1014 (FEKKTPVGEDRFCEASRDVGHLEE). A compositionally biased stretch (basic and acidic residues) spans 1027-1039 (HSRDGAARPKDEG). A phosphoserine mark is found at serine 1047, serine 1063, serine 1084, serine 1096, serine 1126, serine 1131, serine 1171, serine 1212, serine 1241, and serine 1246. Residues 1128-1153 (AGLSPSRKSGGGHFVPPGETKAGAVD) are disordered. Residues 1198–1255 (LARRLGTGESEEPRSLGVGEKDWTSSVEARNRDLPGQAEVGRHSQARESGVGEPDWSG) are disordered. Positions 1208–1230 (EEPRSLGVGEKDWTSSVEARNRD) are enriched in basic and acidic residues. Phosphothreonine is present on threonine 1275. Phosphoserine is present on residues serine 1290, serine 1321, serine 1324, serine 1373, and serine 1375. Residues 1358–1546 (GRVGPDLELD…RGLLPSCPSE (189 aa)) are disordered. Residues 1402-1411 (EDSSSPSFET) are compositionally biased toward polar residues. Phosphoserine occurs at positions 1425, 1429, 1437, 1440, 1442, 1463, and 1466. Over residues 1428–1457 (ASPSSCLTRSPPSGSQSLLEGIMTASSSKG) the composition is skewed to polar residues. Residues 1440–1532 (SGSQSLLEGI…QNEQASAPPP (93 aa)) form a tankyrase-binding region. Positions 1477-1489 (LAAGAGQGEPQEP) are enriched in low complexity. The residue at position 1496 (serine 1496) is a Phosphoserine. Residues 1515-1527 (WSLTGAARQNEQA) show a composition bias toward polar residues. Residue serine 1549 is modified to Phosphoserine. Position 1554 is a phosphothreonine (threonine 1554). Residues 1567-1720 (NLGRKRGHRA…QALKLKKKKI (154 aa)) form a disordered region. Over residues 1568–1577 (LGRKRGHRAP) the composition is skewed to basic residues. The segment covering 1593 to 1606 (SDTRLFQDSTEPRA) has biased composition (basic and acidic residues). Residues serine 1611, serine 1612, and serine 1622 each carry the phosphoserine modification. The Nuclear localization signal motif lies at 1620–1626 (PQSRRTR). The residue at position 1635 (lysine 1635) is an N6-methyllysine. Phosphoserine occurs at positions 1643 and 1657. The segment covering 1656 to 1670 (RSAEEGEVTESKSSQ) has biased composition (basic and acidic residues). The segment covering 1671–1690 (KESSVQRSKSCKVPGLGKPL) has biased composition (low complexity). A Phosphoserine modification is found at serine 1706. Positions 1714 to 1719 (KLKKKK) match the Nuclear localization signal motif.

Binds to the ANK repeat domain of TNKS1 and TNKS2. In terms of processing, ADP-ribosylated by TNKS1.

The protein resides in the nucleus. The protein localises to the cytoplasm. It is found in the cytoskeleton. It localises to the chromosome. This Mus musculus (Mouse) protein is 182 kDa tankyrase-1-binding protein (Tnks1bp1).